The following is a 127-amino-acid chain: Fluoride-specific ion channel FluC (127 aa).

A run of 4 helical transmembrane segments spans residues 4 to 24 (SLLV…LLGM), 37 to 57 (TVVA…FLAA), 68 to 88 (LIIT…AETV), and 96 to 116 (LLWA…MTAA). Na(+) contacts are provided by G75 and T78.

This sequence belongs to the fluoride channel Fluc/FEX (TC 1.A.43) family.

It localises to the cell inner membrane. It catalyses the reaction fluoride(in) = fluoride(out). Na(+) is not transported, but it plays an essential structural role and its presence is essential for fluoride channel function. In terms of biological role, fluoride-specific ion channel. Important for reducing fluoride concentration in the cell, thus reducing its toxicity. In Pseudomonas syringae pv. maculicola, this protein is Fluoride-specific ion channel FluC.